The sequence spans 227 residues: 4-nitrobenzoate reductase (227 aa).

Residue 15 to 19 (RRAVR) coordinates FMN. Residues Ser-45, Tyr-102, and Ile-107 each coordinate NAD(+). Arg-213 contributes to the FMN binding site.

It belongs to the nitroreductase family. FMN is required as a cofactor.

It catalyses the reaction 4-nitrobenzoate + 2 NADH + 2 H(+) = 4-hydroxylaminobenzoate + 2 NAD(+) + H2O. Its function is as follows. Nitroreductase involved in the degradation of nitroaromatic compounds. Catalyzes the conversion of 4-nitrobenzoate to 4-hydroxylaminobenzoate. Required for the catabolism of 4-nitrotoluene. This chain is 4-nitrobenzoate reductase, found in Pseudomonas putida (Arthrobacter siderocapsulatus).